We begin with the raw amino-acid sequence, 486 residues long: Glycogen synthase (486 aa).

Residue Lys-15 coordinates ADP-alpha-D-glucose.

This sequence belongs to the glycosyltransferase 1 family. Bacterial/plant glycogen synthase subfamily.

It carries out the reaction [(1-&gt;4)-alpha-D-glucosyl](n) + ADP-alpha-D-glucose = [(1-&gt;4)-alpha-D-glucosyl](n+1) + ADP + H(+). It participates in glycan biosynthesis; glycogen biosynthesis. Synthesizes alpha-1,4-glucan chains using ADP-glucose. In Pseudothermotoga lettingae (strain ATCC BAA-301 / DSM 14385 / NBRC 107922 / TMO) (Thermotoga lettingae), this protein is Glycogen synthase.